A 178-amino-acid chain; its full sequence is ATP-dependent protease subunit HslV (178 aa).

The active site involves Thr-7. Positions 162, 165, and 168 each coordinate Na(+).

This sequence belongs to the peptidase T1B family. HslV subfamily. In terms of assembly, a double ring-shaped homohexamer of HslV is capped on each side by a ring-shaped HslU homohexamer. The assembly of the HslU/HslV complex is dependent on binding of ATP.

It localises to the cytoplasm. It carries out the reaction ATP-dependent cleavage of peptide bonds with broad specificity.. With respect to regulation, allosterically activated by HslU binding. In terms of biological role, protease subunit of a proteasome-like degradation complex believed to be a general protein degrading machinery. This Cupriavidus taiwanensis (strain DSM 17343 / BCRC 17206 / CCUG 44338 / CIP 107171 / LMG 19424 / R1) (Ralstonia taiwanensis (strain LMG 19424)) protein is ATP-dependent protease subunit HslV.